The primary structure comprises 221 residues: 7-cyano-7-deazaguanine synthase (221 aa).

9 to 19 is an ATP binding site; that stretch reads YSGGMDSFTLL. Zn(2+) contacts are provided by Cys185, Cys193, Cys196, and Cys199.

It belongs to the QueC family. It depends on Zn(2+) as a cofactor.

It catalyses the reaction 7-carboxy-7-deazaguanine + NH4(+) + ATP = 7-cyano-7-deazaguanine + ADP + phosphate + H2O + H(+). Its pathway is purine metabolism; 7-cyano-7-deazaguanine biosynthesis. Its function is as follows. Catalyzes the ATP-dependent conversion of 7-carboxy-7-deazaguanine (CDG) to 7-cyano-7-deazaguanine (preQ(0)). The chain is 7-cyano-7-deazaguanine synthase from Marinobacter nauticus (strain ATCC 700491 / DSM 11845 / VT8) (Marinobacter aquaeolei).